The following is a 407-amino-acid chain: Methyltransferase/ribosomally synthesized type I borosin cyclic peptide precursor ceuMA2 (407 aa).

The methyltransferase domain stretch occupies residues M1–R246. Catalysis depends on residues R70, Y74, and Y96. Positions 96, 98, 101, 128, 170, 208, 239, and 240 each coordinate S-adenosyl-L-methionine. Positions E247 to T370 are clasp domain. The interval P371–S393 is precursor leader. Residues T399 and T400 each carry the N-methylthreonine modification. I401 bears the N-methylisoleucine mark. Residues V402 and V403 each carry the N-methylvaline modification. I404 carries the N-methylisoleucine modification. At V405 the chain carries N-methylvaline. The residue at position 406 (H406) is an N-methylhistidine.

It in the N-terminal section; belongs to the precorrin methyltransferase family. Homodimer. Post-translationally, ceuMA2 automethylates at Thr-399, Thr-400, Ile-401, Val-402, Val-403, Ile-404, Val-405 and His-406 before being processed by a prolyloligopeptidase which likely forms a peptidyl ester upon removal of the follower propeptide, which then undergoes macrocyclization with the N-terminus of the modified core peptide. Peptide backbone alpha-N-methylations change the physicochemical properties of amide bonds to provide structural constraints and other favorable characteristics including biological membrane permeability to peptides.

It participates in secondary metabolite biosynthesis. Functionally, fusion protein of the methyltransferase ceuM2 and a type I borosin core peptide; part of the gene cluster that mediates the biosynthesis of a type I borosin, a highly methylated cyclic peptide with potent biological activities. Type I borosins derive from the C-terminus of the fusion protein, and it is the same protein that methylates its own C-terminus using S-adenosyl methionine (SAM). The C-terminus is subsequently cleaved off and macrocyclized by a prolyloligopeptidase to give the final product. The chain is Methyltransferase/ribosomally synthesized type I borosin cyclic peptide precursor ceuMA2 from Cerrena unicolor (Canker rot fungus).